The chain runs to 396 residues: Protein nipi-4 (396 aa).

The Extracellular portion of the chain corresponds to 1 to 20; that stretch reads MELDHTPPPSVLNDNCSASY. The N-linked (GlcNAc...) asparagine glycan is linked to asparagine 15. A helical transmembrane segment spans residues 21 to 41; that stretch reads MTPYATVIAMSGLYLLAIFYF. Residues 42–396 lie on the Cytoplasmic side of the membrane; the sequence is CKKSKKMCQP…EHHCQSVIHY (355 aa). The Protein kinase domain maps to 81–368; it reads EVDDFQIGQT…SRLSELHHIV (288 aa). ATP contacts are provided by residues 87 to 95 and lysine 111; that span reads IGQTADGFI.

Belongs to the protein kinase superfamily. Tyr protein kinase family. In terms of tissue distribution, expressed in the epidermis of larvae and adults and in vulval and rectal cells.

It localises to the membrane. Its function is as follows. Pseudokinase which plays a role in resistance to fungal infection by promoting expression of antimicrobial peptides (nlp-29, nlp-31, nlp-34, cnc-1, cnc-2 and cnc-4) in the epidermis. In addition, up-regulates nlp-29 expression upon physical wounding and in response to phorbol ester PMA treatment. This chain is Protein nipi-4, found in Caenorhabditis elegans.